The primary structure comprises 254 residues: Alcohol dehydrogenase (254 aa).

10 to 33 (FVAGLGGIGLDTSREIVKSGPKNL) provides a ligand contact to NAD(+). Ser-138 serves as a coordination point for substrate. Residue Tyr-151 is the Proton acceptor of the active site.

It belongs to the short-chain dehydrogenases/reductases (SDR) family. Homodimer.

The enzyme catalyses a primary alcohol + NAD(+) = an aldehyde + NADH + H(+). It catalyses the reaction a secondary alcohol + NAD(+) = a ketone + NADH + H(+). In Drosophila lacicola (Fruit fly), this protein is Alcohol dehydrogenase (Adh1).